We begin with the raw amino-acid sequence, 171 residues long: NADH-quinone oxidoreductase subunit I (171 aa).

4Fe-4S ferredoxin-type domains are found at residues 41–71 and 81–110; these read LTRDPDGEERCVACNLCSVACPVDCISVVKT and ESFTINFSRCIMCGFCEEACPTHAIQLTPD. Residues Cys51, Cys54, Cys57, Cys61, Cys90, Cys93, Cys96, and Cys100 each contribute to the [4Fe-4S] cluster site.

Belongs to the complex I 23 kDa subunit family. NDH-1 is composed of 13 different subunits. Subunits NuoA, H, J, K, L, M, N constitute the membrane sector of the complex. [4Fe-4S] cluster is required as a cofactor.

The protein localises to the cell inner membrane. It carries out the reaction a quinone + NADH + 5 H(+)(in) = a quinol + NAD(+) + 4 H(+)(out). Its function is as follows. NDH-1 shuttles electrons from NADH, via FMN and iron-sulfur (Fe-S) centers, to quinones in the respiratory chain. The immediate electron acceptor for the enzyme in this species is believed to be ubiquinone. Couples the redox reaction to proton translocation (for every two electrons transferred, four hydrogen ions are translocated across the cytoplasmic membrane), and thus conserves the redox energy in a proton gradient. The protein is NADH-quinone oxidoreductase subunit I of Shewanella woodyi (strain ATCC 51908 / MS32).